The following is a 413-amino-acid chain: Methylaspartate ammonia-lyase (413 aa).

Q172 is a (2S,3S)-3-methyl-L-aspartate binding site. Residues D238, E273, and D307 each coordinate Mg(2+). (2S,3S)-3-methyl-L-aspartate is bound at residue Q329. K331 (proton acceptor) is an active-site residue. (2S,3S)-3-methyl-L-aspartate-binding positions include 360-361 (TC) and C361.

This sequence belongs to the methylaspartate ammonia-lyase family. Homodimer. Mg(2+) is required as a cofactor.

It catalyses the reaction (2S,3S)-3-methyl-L-aspartate = mesaconate + NH4(+). It participates in amino-acid degradation; L-glutamate degradation via mesaconate pathway; acetate and pyruvate from L-glutamate: step 2/4. Inhibited by calcium ions. Involved in the methylaspartate cycle. Catalyzes the formation of the alpha,beta-unsaturated bond by the reversible anti elimination of ammonia from L-threo-beta-methylaspartate (L-threo-(2S,3S)-3-methylaspartate) to give mesaconate. It can also use L-erythro-beta-methylaspartate (L-erythro-(2S,3R)-3-methylaspartate), L-aspartate, fumarate and ethylfumarate as substrates. The protein is Methylaspartate ammonia-lyase of Clostridium tetanomorphum.